The following is a 205-amino-acid chain: Outer-membrane lipoprotein carrier protein (205 aa).

The signal sequence occupies residues 1–22 (MKKTTLKFAALTLLGLSNLALA).

Belongs to the LolA family. Monomer.

Its subcellular location is the periplasm. Functionally, participates in the translocation of lipoproteins from the inner membrane to the outer membrane. Only forms a complex with a lipoprotein if the residue after the N-terminal Cys is not an aspartate (The Asp acts as a targeting signal to indicate that the lipoprotein should stay in the inner membrane). The chain is Outer-membrane lipoprotein carrier protein from Haemophilus influenzae (strain PittEE).